The following is a 97-amino-acid chain: Co-chaperonin GroES (97 aa).

It belongs to the GroES chaperonin family. In terms of assembly, heptamer of 7 subunits arranged in a ring. Interacts with the chaperonin GroEL.

Its subcellular location is the cytoplasm. Functionally, together with the chaperonin GroEL, plays an essential role in assisting protein folding. The GroEL-GroES system forms a nano-cage that allows encapsulation of the non-native substrate proteins and provides a physical environment optimized to promote and accelerate protein folding. GroES binds to the apical surface of the GroEL ring, thereby capping the opening of the GroEL channel. The sequence is that of Co-chaperonin GroES from Aeromonas salmonicida (strain A449).